The primary structure comprises 326 residues: Putative ABC transporter ATP-binding protein MPN_334 (326 aa).

The ABC transporter domain occupies 7–239 (VEVKHLEKEF…NFGYRLKVNN (233 aa)). 42-49 (GQNGAGKT) lines the ATP pocket.

Belongs to the ABC transporter superfamily.

The chain is Putative ABC transporter ATP-binding protein MPN_334 from Mycoplasma pneumoniae (strain ATCC 29342 / M129 / Subtype 1) (Mycoplasmoides pneumoniae).